A 69-amino-acid polypeptide reads, in one-letter code: Putative membrane protein insertion efficiency factor (69 aa).

Belongs to the UPF0161 family.

The protein localises to the cell inner membrane. Functionally, could be involved in insertion of integral membrane proteins into the membrane. The chain is Putative membrane protein insertion efficiency factor from Novosphingobium aromaticivorans (strain ATCC 700278 / DSM 12444 / CCUG 56034 / CIP 105152 / NBRC 16084 / F199).